A 268-amino-acid polypeptide reads, in one-letter code: MQVLIFDDKKAVAENAATLLQKLILAKNNANIGLATGSTPIDLYKQLVSMYKNKHISFAQVNTFNLDEYYDIDENNSNSYRYFMNSQLFDHIDIDKNNTHLPTCNAKQDPRKQGEHFEQQIAALGGLDLQLLGIGGNGHIGFNEPSSSFASRTRIKSLTEQTVSDNSRMFSDDEQQPKMAMTMGIATIMDAKYVLLIATGKNKAQAVNDMVNGPLSASCPASILQMHKNAIVIIDNDAASLLANKDYFTWVSQQNHEINQAFGHFPDL.

Asp-67 functions as the Proton acceptor; for enolization step in the catalytic mechanism. Asn-137 (for ring-opening step) is an active-site residue. His-139 serves as the catalytic Proton acceptor; for ring-opening step. Glu-144 acts as the For ring-opening step in catalysis.

It belongs to the glucosamine/galactosamine-6-phosphate isomerase family. NagB subfamily. Homohexamer.

It catalyses the reaction alpha-D-glucosamine 6-phosphate + H2O = beta-D-fructose 6-phosphate + NH4(+). It participates in amino-sugar metabolism; N-acetylneuraminate degradation; D-fructose 6-phosphate from N-acetylneuraminate: step 5/5. In terms of biological role, catalyzes the reversible isomerization-deamination of glucosamine 6-phosphate (GlcN6P) to form fructose 6-phosphate (Fru6P) and ammonium ion. In Pseudoalteromonas translucida (strain TAC 125), this protein is Glucosamine-6-phosphate deaminase.